A 152-amino-acid polypeptide reads, in one-letter code: UPF0178 protein KPN78578_03210 (152 aa).

Belongs to the UPF0178 family.

The chain is UPF0178 protein KPN78578_03210 from Klebsiella pneumoniae subsp. pneumoniae (strain ATCC 700721 / MGH 78578).